We begin with the raw amino-acid sequence, 106 residues long: MNRIYACPVADVPEGEALRIDTSPVIALFNVGGEFYAINDRCSHGNASMSEGYLEDDATVECPLHAASFCLKTGKALCLPATDPLSTYPVHVEGGDIFIDLPEAQP.

The 96-residue stretch at 4-99 (IYACPVADVP…VHVEGGDIFI (96 aa)) folds into the Rieske domain. Residues Cys-42, His-44, Cys-62, and His-65 each coordinate [2Fe-2S] cluster.

The protein belongs to the bacterial ring-hydroxylating dioxygenase ferredoxin component family. This dioxygenase system consists of four proteins: the two subunits of the hydroxylase component (HcaE and HcaF), a ferredoxin (HcaC) and a ferredoxin reductase (HcaD). Requires [2Fe-2S] cluster as cofactor.

It functions in the pathway aromatic compound metabolism; 3-phenylpropanoate degradation. Functionally, part of the multicomponent 3-phenylpropionate dioxygenase, that converts 3-phenylpropionic acid (PP) and cinnamic acid (CI) into 3-phenylpropionate-dihydrodiol (PP-dihydrodiol) and cinnamic acid-dihydrodiol (CI-dihydrodiol), respectively. This protein seems to be a 2Fe-2S ferredoxin. This Shigella flexneri serotype 5b (strain 8401) protein is 3-phenylpropionate/cinnamic acid dioxygenase ferredoxin subunit.